A 366-amino-acid polypeptide reads, in one-letter code: Peptide chain release factor 2 (366 aa).

N5-methylglutamine is present on Gln251.

It belongs to the prokaryotic/mitochondrial release factor family. Methylated by PrmC. Methylation increases the termination efficiency of RF2.

The protein localises to the cytoplasm. Its function is as follows. Peptide chain release factor 2 directs the termination of translation in response to the peptide chain termination codons UGA and UAA. The chain is Peptide chain release factor 2 from Campylobacter lari (strain RM2100 / D67 / ATCC BAA-1060).